The following is a 627-amino-acid chain: 1-deoxy-D-xylulose-5-phosphate synthase (627 aa).

Thiamine diphosphate is bound by residues H80 and 121–123 (GHS). Residue D152 coordinates Mg(2+). Residues 153-154 (GA), N181, Y288, and E370 contribute to the thiamine diphosphate site. N181 is a Mg(2+) binding site.

The protein belongs to the transketolase family. DXPS subfamily. As to quaternary structure, homodimer. The cofactor is Mg(2+). Requires thiamine diphosphate as cofactor.

The enzyme catalyses D-glyceraldehyde 3-phosphate + pyruvate + H(+) = 1-deoxy-D-xylulose 5-phosphate + CO2. It participates in metabolic intermediate biosynthesis; 1-deoxy-D-xylulose 5-phosphate biosynthesis; 1-deoxy-D-xylulose 5-phosphate from D-glyceraldehyde 3-phosphate and pyruvate: step 1/1. Its function is as follows. Catalyzes the acyloin condensation reaction between C atoms 2 and 3 of pyruvate and glyceraldehyde 3-phosphate to yield 1-deoxy-D-xylulose-5-phosphate (DXP). The sequence is that of 1-deoxy-D-xylulose-5-phosphate synthase from Aliivibrio salmonicida (strain LFI1238) (Vibrio salmonicida (strain LFI1238)).